The chain runs to 328 residues: HTH-type transcriptional regulator MalR (328 aa).

One can recognise an HTH lacI-type domain in the interval 2-57 (PVTIKDVAKAAGVSPSTVTRVIQNKSTISDETKKRVRKAMKELNYHPNLNARSLVS). Positions 5 to 24 (IKDVAKAAGVSPSTVTRVIQ) form a DNA-binding region, H-T-H motif. Residues 173–218 (TEYFIKKGCKRIAFIGGSKKLFVTKDRLTGYEQALKHYKLTTDNNR) form an inducer binding region. Residues 282 to 291 (NLAAYVDINS) are dimerization.

In terms of biological role, transcriptional repressor of the maltosaccharide utilization operons malxCD and malMP. The polypeptide is HTH-type transcriptional regulator MalR (malR) (Streptococcus pneumoniae serotype 4 (strain ATCC BAA-334 / TIGR4)).